The following is a 1171-amino-acid chain: ATP-dependent helicase/deoxyribonuclease subunit B (1171 aa).

One can recognise a UvrD-like helicase ATP-binding domain in the interval 1-343 (MSLRFVIGRA…LVAEENYRYR (343 aa)). 8–15 (GRAGSGKS) is a binding site for ATP. Residues 281–587 (MEQPRFHSPA…QFANIPPSLD (307 aa)) enclose the UvrD-like helicase C-terminal domain. [4Fe-4S] cluster-binding residues include Cys-805, Cys-1129, Cys-1132, and Cys-1138.

The protein belongs to the helicase family. AddB/RexB type 1 subfamily. As to quaternary structure, heterodimer of AddA and AddB. The cofactor is Mg(2+). Requires [4Fe-4S] cluster as cofactor.

The heterodimer acts as both an ATP-dependent DNA helicase and an ATP-dependent, dual-direction single-stranded exonuclease. Recognizes the chi site generating a DNA molecule suitable for the initiation of homologous recombination. The AddB subunit has 5' -&gt; 3' nuclease activity but not helicase activity. This Bacillus thuringiensis subsp. konkukian (strain 97-27) protein is ATP-dependent helicase/deoxyribonuclease subunit B.